The following is a 346-amino-acid chain: Holliday junction branch migration complex subunit RuvB (346 aa).

The interval 1–188 (MSDEYGPPER…FGIVQRLAYY (188 aa)) is large ATPase domain (RuvB-L). ATP is bound by residues Leu-27, Arg-28, Gly-69, Lys-72, Thr-73, Thr-74, 135 to 137 (EDF), Arg-178, Tyr-188, and Arg-225. Thr-73 is a Mg(2+) binding site. The tract at residues 189–259 (PVDELTRIVQ…VAADAMELLD (71 aa)) is small ATPAse domain (RuvB-S). The segment at 262–346 (RNGLDEQDRR…QAAGSGDLFG (85 aa)) is head domain (RuvB-H). Positions 298, 317, and 322 each coordinate DNA.

Belongs to the RuvB family. Homohexamer. Forms an RuvA(8)-RuvB(12)-Holliday junction (HJ) complex. HJ DNA is sandwiched between 2 RuvA tetramers; dsDNA enters through RuvA and exits via RuvB. An RuvB hexamer assembles on each DNA strand where it exits the tetramer. Each RuvB hexamer is contacted by two RuvA subunits (via domain III) on 2 adjacent RuvB subunits; this complex drives branch migration. In the full resolvosome a probable DNA-RuvA(4)-RuvB(12)-RuvC(2) complex forms which resolves the HJ.

It is found in the cytoplasm. The enzyme catalyses ATP + H2O = ADP + phosphate + H(+). Functionally, the RuvA-RuvB-RuvC complex processes Holliday junction (HJ) DNA during genetic recombination and DNA repair, while the RuvA-RuvB complex plays an important role in the rescue of blocked DNA replication forks via replication fork reversal (RFR). RuvA specifically binds to HJ cruciform DNA, conferring on it an open structure. The RuvB hexamer acts as an ATP-dependent pump, pulling dsDNA into and through the RuvAB complex. RuvB forms 2 homohexamers on either side of HJ DNA bound by 1 or 2 RuvA tetramers; 4 subunits per hexamer contact DNA at a time. Coordinated motions by a converter formed by DNA-disengaged RuvB subunits stimulates ATP hydrolysis and nucleotide exchange. Immobilization of the converter enables RuvB to convert the ATP-contained energy into a lever motion, pulling 2 nucleotides of DNA out of the RuvA tetramer per ATP hydrolyzed, thus driving DNA branch migration. The RuvB motors rotate together with the DNA substrate, which together with the progressing nucleotide cycle form the mechanistic basis for DNA recombination by continuous HJ branch migration. Branch migration allows RuvC to scan DNA until it finds its consensus sequence, where it cleaves and resolves cruciform DNA. The protein is Holliday junction branch migration complex subunit RuvB of Halorhodospira halophila (strain DSM 244 / SL1) (Ectothiorhodospira halophila (strain DSM 244 / SL1)).